The primary structure comprises 150 residues: MAENFHILLLNGPNLNLLGTREPDKYGNTTLADIVSELETQAQALNVKFSHLQSNAEHVLIDTIHQARGNTDFILINPAAFTHTSVALRDALLAVAIPFIEIHLSNVHAREPFRHHSYLSDVAVGVICGLGADGYQYALQTAVKRLSTSN.

Tyr26 acts as the Proton acceptor in catalysis. Substrate-binding residues include Asn77, His83, and Asp90. The active-site Proton donor is the His103. Substrate-binding positions include 104–105 (LS) and Arg114.

The protein belongs to the type-II 3-dehydroquinase family. In terms of assembly, homododecamer.

It carries out the reaction 3-dehydroquinate = 3-dehydroshikimate + H2O. The protein operates within metabolic intermediate biosynthesis; chorismate biosynthesis; chorismate from D-erythrose 4-phosphate and phosphoenolpyruvate: step 3/7. Functionally, catalyzes a trans-dehydration via an enolate intermediate. This Pectobacterium atrosepticum (strain SCRI 1043 / ATCC BAA-672) (Erwinia carotovora subsp. atroseptica) protein is 3-dehydroquinate dehydratase.